Here is an 884-residue protein sequence, read N- to C-terminus: Protein P (884 aa).

The segment at 1–184 (MHPFSRLFRN…GKPYSWEHRQ (184 aa)) is terminal protein domain (TP). Positions 185 to 387 (LVQHNGQQHK…YCIHHIVSSL (203 aa)) are spacer. The interval 299-345 (RNSGHTTWFSSASNSNKSRSREKAYSSNSTSKRYSPPLNYEKSDFSS) is disordered. A polymerase/reverse transcriptase domain (RT) region spans residues 388-729 (DDWGPCTVTG…YEELWPVVRQ (342 aa)). The Reverse transcriptase domain maps to 398–639 (DVTIKSPRTP…NHLHFMGYVI (242 aa)). Mg(2+) contacts are provided by Asp470, Asp590, and Asp591.

It belongs to the hepadnaviridae P protein family.

The enzyme catalyses DNA(n) + a 2'-deoxyribonucleoside 5'-triphosphate = DNA(n+1) + diphosphate. It carries out the reaction Endonucleolytic cleavage to 5'-phosphomonoester.. Activated by host HSP70 and HSP40 in vitro to be able to bind the epsilon loop of the pgRNA. Because deletion of the RNase H region renders the protein partly chaperone-independent, the chaperones may be needed indirectly to relieve occlusion of the RNA-binding site by this domain. Inhibited by several reverse-transcriptase inhibitors: Lamivudine, Adefovir and Entecavir. Its function is as follows. Multifunctional enzyme that converts the viral RNA genome into dsDNA in viral cytoplasmic capsids. This enzyme displays a DNA polymerase activity that can copy either DNA or RNA templates, and a ribonuclease H (RNase H) activity that cleaves the RNA strand of RNA-DNA heteroduplexes in a partially processive 3'- to 5'-endonucleasic mode. Neo-synthesized pregenomic RNA (pgRNA) are encapsidated together with the P protein, and reverse-transcribed inside the nucleocapsid. Initiation of reverse-transcription occurs first by binding the epsilon loop on the pgRNA genome, and is initiated by protein priming, thereby the 5'-end of (-)DNA is covalently linked to P protein. Partial (+)DNA is synthesized from the (-)DNA template and generates the relaxed circular DNA (RC-DNA) genome. After budding and infection, the RC-DNA migrates in the nucleus, and is converted into a plasmid-like covalently closed circular DNA (cccDNA). The activity of P protein does not seem to be necessary for cccDNA generation, and is presumably released from (+)DNA by host nuclear DNA repair machinery. This is Protein P from Marmota monax (Woodchuck).